Reading from the N-terminus, the 129-residue chain is Small ribosomal subunit protein uS11 (129 aa).

It belongs to the universal ribosomal protein uS11 family. As to quaternary structure, part of the 30S ribosomal subunit. Interacts with proteins S7 and S18. Binds to IF-3.

Its function is as follows. Located on the platform of the 30S subunit, it bridges several disparate RNA helices of the 16S rRNA. Forms part of the Shine-Dalgarno cleft in the 70S ribosome. The polypeptide is Small ribosomal subunit protein uS11 (Methylobacterium sp. (strain 4-46)).